Reading from the N-terminus, the 551-residue chain is Eukaryotic translation initiation factor 3 subunit D-2 (551 aa).

The interval 108 to 152 (RARGRTGRGNATLGGLGGPVAGGSTANSTKYGKGRNTRNAQNMGR) is disordered. The span at 119-128 (TLGGLGGPVA) shows a compositional bias: gly residues. An RNA gate region spans residues 290 to 304 (QFDLLTVNETSLEPP). The disordered stretch occupies residues 530–551 (AFDSDGDDESESSEPFGNSIDN). Residues 531 to 541 (FDSDGDDESES) show a composition bias toward acidic residues.

It belongs to the eIF-3 subunit D family. As to quaternary structure, component of the eukaryotic translation initiation factor 3 (eIF-3) complex. The eIF-3 complex interacts with pix.

It is found in the cytoplasm. Functionally, mRNA cap-binding component of the eukaryotic translation initiation factor 3 (eIF-3) complex, which is involved in protein synthesis of a specialized repertoire of mRNAs and, together with other initiation factors, stimulates binding of mRNA and methionyl-tRNAi to the 40S ribosome. The eIF-3 complex specifically targets and initiates translation of a subset of mRNAs involved in cell proliferation. In the eIF-3 complex, eif3d specifically recognizes and binds the 7-methylguanosine cap of a subset of mRNAs. The protein is Eukaryotic translation initiation factor 3 subunit D-2 of Drosophila yakuba (Fruit fly).